The following is an 815-amino-acid chain: Serotype-specific mannosyltransferase WbdA (815 aa).

The interval 1-374 is alpha-(1-&gt;2)-mannosyltransferase; that stretch reads MSRAIIENAG…WANTAHLAIE (374 aa). An alpha-(1-&gt;3)-mannosyltransferase region spans residues 431 to 804; sequence KLLVDISVLA…WKQSAEFLLK (374 aa).

This sequence belongs to the glycosyltransferase group 1 family. Glycosyltransferase 4 subfamily. As to quaternary structure, monomer. Interacts with the C-terminal region of WbdD.

Its subcellular location is the cell inner membrane. The catalysed reaction is [alpha-D-Man-(1-&gt;3)-alpha-D-Man-(1-&gt;3)-alpha-D-Man-(1-&gt;2)-alpha-D-Man-(1-&gt;2)](n)-alpha-D-Man-(1-&gt;3)-alpha-D-Man-(1-&gt;3)-alpha-D-Man-(1-&gt;3)-alpha-D-GlcNAc-di-trans,octa-cis-undecaprenyl diphosphate + 2 GDP-alpha-D-mannose = alpha-D-Man-(1-&gt;2)-alpha-D-Man-(1-&gt;2)-[alpha-D-Man-(1-&gt;3)-alpha-D-Man-(1-&gt;3)-alpha-D-Man-(1-&gt;2)-alpha-D-Man-(1-&gt;2)](n)-alpha-D-Man-(1-&gt;3)-alpha-D-Man-(1-&gt;3)-alpha-D-Man-(1-&gt;3)-alpha-D-GlcNAc-di-trans,octa-cis-undecaprenyl diphosphate + 2 GDP + 2 H(+). It catalyses the reaction alpha-D-Man-(1-&gt;2)-alpha-D-Man-(1-&gt;2)-[alpha-D-Man-(1-&gt;3)-alpha-D-Man-(1-&gt;3)-alpha-D-Man-(1-&gt;2)-alpha-D-Man-(1-&gt;2)](n)-alpha-D-Man-(1-&gt;3)-alpha-D-Man-(1-&gt;3)-alpha-D-Man-(1-&gt;3)-alpha-D-GlcNAc-di-trans,octa-cis-undecaprenyl diphosphate + 2 GDP-alpha-D-mannose = [alpha-D-Man-(1-&gt;3)-alpha-D-Man-(1-&gt;3)-alpha-D-Man-(1-&gt;2)-alpha-D-Man-(1-&gt;2)](n+1)-alpha-D-Man-(1-&gt;3)-alpha-D-Man-(1-&gt;3)-alpha-D-Man-(1-&gt;3)-alpha-D-GlcNAc-di-trans,octa-cis-undecaprenyl diphosphate + 2 GDP + 2 H(+). Its pathway is bacterial outer membrane biogenesis; LPS O-antigen biosynthesis. In terms of biological role, mannosyltransferase involved in the biosynthesis of the repeat unit of the lipopolysaccharide (LPS) O-antigen region. Catalyzes the polymerization of a tetrasaccharide repeat unit containing two alpha-(1-&gt;3)- and two alpha-(1-&gt;2)-linked mannopyranose residues. This chain is Serotype-specific mannosyltransferase WbdA, found in Escherichia coli.